The sequence spans 424 residues: Adenylosuccinate synthetase 2 (424 aa).

Residues 11–17 (GDEGKGK) and 39–41 (GHT) each bind GTP. The active-site Proton acceptor is the Asp-12. Mg(2+) contacts are provided by Asp-12 and Gly-39. IMP contacts are provided by residues 12–15 (DEGK), 37–40 (NAGH), Thr-127, Arg-141, Gln-223, Thr-238, and Arg-302. Residue His-40 is the Proton donor of the active site. Position 298-304 (298-304 (TTTGRGR)) interacts with substrate. Residues Arg-304, 330 to 332 (KLD), and 412 to 414 (SVG) each bind GTP.

This sequence belongs to the adenylosuccinate synthetase family. As to quaternary structure, homodimer. Mg(2+) is required as a cofactor.

The protein resides in the cytoplasm. It carries out the reaction IMP + L-aspartate + GTP = N(6)-(1,2-dicarboxyethyl)-AMP + GDP + phosphate + 2 H(+). It participates in purine metabolism; AMP biosynthesis via de novo pathway; AMP from IMP: step 1/2. Its function is as follows. Plays an important role in the de novo pathway of purine nucleotide biosynthesis. Catalyzes the first committed step in the biosynthesis of AMP from IMP. In Methanosarcina acetivorans (strain ATCC 35395 / DSM 2834 / JCM 12185 / C2A), this protein is Adenylosuccinate synthetase 2.